A 148-amino-acid polypeptide reads, in one-letter code: Hemoglobin subunit beta (148 aa).

The 146-residue stretch at D3 to H148 folds into the Globin domain. Residues H64 and H93 each contribute to the heme b site.

It belongs to the globin family. In terms of assembly, heterotetramer of two alpha chains and two beta chains. In terms of tissue distribution, red blood cells.

Its function is as follows. Involved in oxygen transport from gills to the various peripheral tissues. In Oncorhynchus nerka (Sockeye salmon), this protein is Hemoglobin subunit beta (hbb).